Reading from the N-terminus, the 161-residue chain is 3-isopropylmalate dehydratase small subunit (161 aa).

Belongs to the LeuD family. LeuD type 2 subfamily. Heterodimer of LeuC and LeuD.

It carries out the reaction (2R,3S)-3-isopropylmalate = (2S)-2-isopropylmalate. Its pathway is amino-acid biosynthesis; L-leucine biosynthesis; L-leucine from 3-methyl-2-oxobutanoate: step 2/4. In terms of biological role, catalyzes the isomerization between 2-isopropylmalate and 3-isopropylmalate, via the formation of 2-isopropylmaleate. The chain is 3-isopropylmalate dehydratase small subunit from Clostridium beijerinckii (strain ATCC 51743 / NCIMB 8052) (Clostridium acetobutylicum).